We begin with the raw amino-acid sequence, 116 residues long: Ribosome-binding factor A (116 aa).

This sequence belongs to the RbfA family. As to quaternary structure, monomer. Binds 30S ribosomal subunits, but not 50S ribosomal subunits or 70S ribosomes.

It is found in the cytoplasm. One of several proteins that assist in the late maturation steps of the functional core of the 30S ribosomal subunit. Associates with free 30S ribosomal subunits (but not with 30S subunits that are part of 70S ribosomes or polysomes). Required for efficient processing of 16S rRNA. May interact with the 5'-terminal helix region of 16S rRNA. The chain is Ribosome-binding factor A from Pediococcus pentosaceus (strain ATCC 25745 / CCUG 21536 / LMG 10740 / 183-1w).